Consider the following 113-residue polypeptide: P antigen family member 3 (113 aa).

Over residues 1–12 (MSGHQRTRSRSR) the composition is skewed to basic residues. 2 disordered regions span residues 1-61 (MSGH…EGAL) and 78-113 (SKTG…QPSV).

This sequence belongs to the GAGE family.

This is P antigen family member 3 (PAGE3) from Homo sapiens (Human).